The primary structure comprises 435 residues: Serine--tRNA ligase (435 aa).

242–244 (TAE) provides a ligand contact to L-serine. 273 to 275 (RSE) is a binding site for ATP. Residue E296 coordinates L-serine. 360 to 363 (EISS) serves as a coordination point for ATP. S396 contributes to the L-serine binding site.

Belongs to the class-II aminoacyl-tRNA synthetase family. Type-1 seryl-tRNA synthetase subfamily. As to quaternary structure, homodimer. The tRNA molecule binds across the dimer.

It localises to the cytoplasm. The catalysed reaction is tRNA(Ser) + L-serine + ATP = L-seryl-tRNA(Ser) + AMP + diphosphate + H(+). It carries out the reaction tRNA(Sec) + L-serine + ATP = L-seryl-tRNA(Sec) + AMP + diphosphate + H(+). Its pathway is aminoacyl-tRNA biosynthesis; selenocysteinyl-tRNA(Sec) biosynthesis; L-seryl-tRNA(Sec) from L-serine and tRNA(Sec): step 1/1. Catalyzes the attachment of serine to tRNA(Ser). Is also able to aminoacylate tRNA(Sec) with serine, to form the misacylated tRNA L-seryl-tRNA(Sec), which will be further converted into selenocysteinyl-tRNA(Sec). The protein is Serine--tRNA ligase of Vibrio parahaemolyticus serotype O3:K6 (strain RIMD 2210633).